Here is an 84-residue protein sequence, read N- to C-terminus: Exodeoxyribonuclease 7 small subunit (84 aa).

Belongs to the XseB family. Heterooligomer composed of large and small subunits.

The protein resides in the cytoplasm. It carries out the reaction Exonucleolytic cleavage in either 5'- to 3'- or 3'- to 5'-direction to yield nucleoside 5'-phosphates.. Bidirectionally degrades single-stranded DNA into large acid-insoluble oligonucleotides, which are then degraded further into small acid-soluble oligonucleotides. This chain is Exodeoxyribonuclease 7 small subunit, found in Janthinobacterium sp. (strain Marseille) (Minibacterium massiliensis).